The sequence spans 428 residues: Pyruvate dehydrogenase E1 component subunit alpha-3, chloroplastic (428 aa).

A chloroplast-targeting transit peptide spans 1–61 (MATAFAPTKL…NATRRSPVVS (61 aa)). Residues His-115, Tyr-141, Arg-142, Ala-190, Ile-192, Asp-227, Gly-228, and Asn-256 each coordinate pyruvate. Residues Tyr-141, Arg-142, Ala-190, Ile-192, Asp-227, Gly-228, Asn-256, and His-325 each coordinate thiamine diphosphate. Asp-227 contributes to the Mg(2+) binding site. Asn-256 is a Mg(2+) binding site.

As to quaternary structure, tetramer of 2 alpha and 2 beta subunits. Requires thiamine diphosphate as cofactor. The cofactor is Mg(2+).

It localises to the plastid. It is found in the chloroplast. It carries out the reaction N(6)-[(R)-lipoyl]-L-lysyl-[protein] + pyruvate + H(+) = N(6)-[(R)-S(8)-acetyldihydrolipoyl]-L-lysyl-[protein] + CO2. Its function is as follows. The pyruvate dehydrogenase complex catalyzes the overall conversion of pyruvate to acetyl-CoA and CO(2). It contains multiple copies of three enzymatic components: pyruvate dehydrogenase (E1), dihydrolipoamide acetyltransferase (E2) and lipoamide dehydrogenase (E3). The protein is Pyruvate dehydrogenase E1 component subunit alpha-3, chloroplastic (PDH-E1 ALPHA) of Arabidopsis thaliana (Mouse-ear cress).